The chain runs to 71 residues: Exodeoxyribonuclease 7 small subunit (71 aa).

It belongs to the XseB family. Heterooligomer composed of large and small subunits.

The protein localises to the cytoplasm. The enzyme catalyses Exonucleolytic cleavage in either 5'- to 3'- or 3'- to 5'-direction to yield nucleoside 5'-phosphates.. Bidirectionally degrades single-stranded DNA into large acid-insoluble oligonucleotides, which are then degraded further into small acid-soluble oligonucleotides. The protein is Exodeoxyribonuclease 7 small subunit of Streptococcus equi subsp. zooepidemicus (strain H70).